We begin with the raw amino-acid sequence, 207 residues long: Infectivity protein P11 (207 aa).

The chain crosses the membrane as a helical span at residues 13–28 (WWIVAAIGGLAAFLLL). A coiled-coil region spans residues 64 to 95 (AALQANTQLSAQNAQLQAQMDASRLQLETQLN).

Its subcellular location is the virion membrane. In terms of biological role, component of the phage ejection machinery. Pilot protein for the formation of the tube that conducts the genome into the target cell. Probably involved in penetration of the bacterial outer membrane and for making the peptidoglycan layer accessible to the viral transglycosylase. Essential for viral infectivity. The sequence is that of Infectivity protein P11 (XI) from Enterobacteria phage PRD1 (Bacteriophage PRD1).